A 506-amino-acid polypeptide reads, in one-letter code: Anaerobic nitric oxide reductase transcription regulator NorR (506 aa).

A 4-aspartylphosphate modification is found at D57. The region spanning 187 to 416 (MIGLSPAMTQ…LEHAIHRAVV (230 aa)) is the Sigma-54 factor interaction domain. ATP contacts are provided by residues 215 to 222 (GETGTGKE) and 278 to 287 (ADNGTLFLDE). Residues 481–500 (WAASARALETDVANLHRLAK) constitute a DNA-binding region (H-T-H motif).

Its pathway is nitrogen metabolism; nitric oxide reduction. In terms of biological role, required for the expression of anaerobic nitric oxide (NO) reductase, acts as a transcriptional activator for at least the norVW operon. Activation also requires sigma-54. The polypeptide is Anaerobic nitric oxide reductase transcription regulator NorR (Salmonella newport (strain SL254)).